The following is a 396-amino-acid chain: Tryptophan synthase beta chain (396 aa).

Lys-88 carries the N6-(pyridoxal phosphate)lysine modification.

This sequence belongs to the TrpB family. As to quaternary structure, tetramer of two alpha and two beta chains. Pyridoxal 5'-phosphate serves as cofactor.

It catalyses the reaction (1S,2R)-1-C-(indol-3-yl)glycerol 3-phosphate + L-serine = D-glyceraldehyde 3-phosphate + L-tryptophan + H2O. It functions in the pathway amino-acid biosynthesis; L-tryptophan biosynthesis; L-tryptophan from chorismate: step 5/5. Functionally, the beta subunit is responsible for the synthesis of L-tryptophan from indole and L-serine. The protein is Tryptophan synthase beta chain of Shewanella oneidensis (strain ATCC 700550 / JCM 31522 / CIP 106686 / LMG 19005 / NCIMB 14063 / MR-1).